An 893-amino-acid polypeptide reads, in one-letter code: Beta-adaptin-like protein C (893 aa).

The segment at 593–621 (TEDEDYVEGSETGYPEASGNPVDGAASPS) is disordered.

This sequence belongs to the adaptor complexes large subunit family. Adaptor protein complexes are heterotetramers composed of two large adaptins (beta-type subunit and alpha-type or delta-type or epsilon-type or gamma-type subunit), a medium adaptin (mu-type subunit) and a small adaptin (sigma-type subunit).

It is found in the golgi apparatus. The protein resides in the trans-Golgi network. It localises to the cytoplasmic vesicle. Its subcellular location is the clathrin-coated vesicle membrane. Subunit of clathrin-associated adaptor protein complex that plays a role in protein sorting in the late-Golgi/trans-Golgi network (TGN) and/or endosomes. The AP complexes mediate both the recruitment of clathrin to membranes and the recognition of sorting signals within the cytosolic tails of transmembrane cargo molecules. This is Beta-adaptin-like protein C (BETAC-AD) from Arabidopsis thaliana (Mouse-ear cress).